A 370-amino-acid polypeptide reads, in one-letter code: Putative phosphoserine aminotransferase (370 aa).

The tract at residues 1-22 (MAELTIPADLKPRDGRFGSGPS) is disordered. Residue Arg-44 coordinates L-glutamate. 4 residues coordinate pyridoxal 5'-phosphate: Phe-102, Thr-148, Asp-170, and Gln-193. Position 194 is an N6-(pyridoxal phosphate)lysine (Lys-194). Pyridoxal 5'-phosphate is bound at residue 245–246 (NT).

The protein belongs to the class-V pyridoxal-phosphate-dependent aminotransferase family. SerC subfamily. Homodimer. Requires pyridoxal 5'-phosphate as cofactor.

The protein resides in the cytoplasm. The enzyme catalyses O-phospho-L-serine + 2-oxoglutarate = 3-phosphooxypyruvate + L-glutamate. It catalyses the reaction 4-(phosphooxy)-L-threonine + 2-oxoglutarate = (R)-3-hydroxy-2-oxo-4-phosphooxybutanoate + L-glutamate. It participates in amino-acid biosynthesis; L-serine biosynthesis; L-serine from 3-phospho-D-glycerate: step 2/3. It functions in the pathway cofactor biosynthesis; pyridoxine 5'-phosphate biosynthesis; pyridoxine 5'-phosphate from D-erythrose 4-phosphate: step 3/5. Its function is as follows. Catalyzes the reversible conversion of 3-phosphohydroxypyruvate to phosphoserine and of 3-hydroxy-2-oxo-4-phosphonooxybutanoate to phosphohydroxythreonine. This Mycobacterium sp. (strain JLS) protein is Putative phosphoserine aminotransferase.